The chain runs to 90 residues: Small ribosomal subunit protein bS20 (90 aa).

This sequence belongs to the bacterial ribosomal protein bS20 family.

In terms of biological role, binds directly to 16S ribosomal RNA. This chain is Small ribosomal subunit protein bS20, found in Francisella tularensis subsp. holarctica (strain FTNF002-00 / FTA).